The primary structure comprises 171 residues: Orotate phosphoribosyltransferase (171 aa).

5-phospho-alpha-D-ribose 1-diphosphate is bound by residues R85, K86, R88, H90, and 110 to 118 (EDVVTTGNS). T114 and R142 together coordinate orotate.

This sequence belongs to the purine/pyrimidine phosphoribosyltransferase family. PyrE subfamily. In terms of assembly, homodimer. It depends on Mg(2+) as a cofactor.

The catalysed reaction is orotidine 5'-phosphate + diphosphate = orotate + 5-phospho-alpha-D-ribose 1-diphosphate. It participates in pyrimidine metabolism; UMP biosynthesis via de novo pathway; UMP from orotate: step 1/2. Its function is as follows. Catalyzes the transfer of a ribosyl phosphate group from 5-phosphoribose 1-diphosphate to orotate, leading to the formation of orotidine monophosphate (OMP). The protein is Orotate phosphoribosyltransferase of Thermoplasma acidophilum (strain ATCC 25905 / DSM 1728 / JCM 9062 / NBRC 15155 / AMRC-C165).